The following is a 315-amino-acid chain: Cobalamin biosynthesis protein CobD (315 aa).

5 consecutive transmembrane segments (helical) span residues 54–74, 78–98, 152–172, 203–223, and 295–315; these read GLLFVLTVGMTGAVSWFILFL, IAYWLYVAVFVYLGYTTLAMT, ADGVIAPLFYLFIGGPVLALM, IANFIPARLAWFFLVIASFIL, and LLYMASTIAFIMFASIYLLLF.

The protein belongs to the CobD/CbiB family.

It localises to the cell membrane. It participates in cofactor biosynthesis; adenosylcobalamin biosynthesis. Functionally, converts cobyric acid to cobinamide by the addition of aminopropanol on the F carboxylic group. The sequence is that of Cobalamin biosynthesis protein CobD from Listeria monocytogenes serovar 1/2a (strain ATCC BAA-679 / EGD-e).